The sequence spans 131 residues: Histone H2B.1 (131 aa).

Positions 1–19 (MSAKAEKKPASKAPAEKKP) are enriched in basic and acidic residues. Positions 1 to 38 (MSAKAEKKPASKAPAEKKPAAKKTSTSTDGKKRSKARK) are disordered. Lysine 7 and lysine 8 each carry N6-acetyllysine; alternate. Residues lysine 7 and lysine 8 each participate in a glycyl lysine isopeptide (Lys-Gly) (interchain with G-Cter in SUMO); alternate cross-link. Serine 11 carries the phosphoserine modification. Lysine 12 carries the post-translational modification N6-acetyllysine. An N6-acetyllysine; alternate mark is found at lysine 17, lysine 18, lysine 22, and lysine 23. Glycyl lysine isopeptide (Lys-Gly) (interchain with G-Cter in SUMO); alternate cross-links involve residues lysine 17 and lysine 18. Lysine 22 carries the post-translational modification N6-butyryllysine; alternate. An N6-methyllysine; alternate modification is found at lysine 23. The residue at position 35 (lysine 35) is an N6-succinyllysine. Lysine 38 carries the N6,N6-dimethyllysine modification. Lysine 47 carries the N6-succinyllysine modification. Lysine 124 is covalently cross-linked (Glycyl lysine isopeptide (Lys-Gly) (interchain with G-Cter in ubiquitin)).

The protein belongs to the histone H2B family. The nucleosome is a histone octamer containing two molecules each of H2A, H2B, H3 and H4 assembled in one H3-H4 heterotetramer and two H2A-H2B heterodimers. The octamer wraps approximately 147 bp of DNA. In terms of processing, monoubiquitinated by the RAD6/UBC2-BRE1 complex to form H2BK123ub1. H2BK123ub1 gives a specific tag for epigenetic transcriptional activation and is also prerequisite for H3K4me and H3K79me formation. H2BK123ub1 also modulates the formation of double-strand breaks during meiosis and is a prerequisite for DNA-damage checkpoint activation. Deubiquitination is performed by UBP8 in presence of SGF11. Phosphorylated by STE20 to form H2BS10ph during progression through meiotic prophase. May be correlated with chromosome condensation. H2BS10ph is also formed after H(2)O(2) treatment, and is a step leading to apoptosis. Post-translationally, acetylated by GCN5, a component of the SAGA complex, to form H2BK11ac and H2BK16ac. H2BK16ac can also be formed by ESA1, a component of the NuA4 histone acetyltransferase (HAT) complex. Acetylation of N-terminal lysines and particularly formation of H2BK11acK16ac has a positive effect on transcription. In terms of processing, sumoylation to form H2BK6su or H2BK7su, and probably also H2BK16su or H2BK17su, occurs preferentially near the telomeres and represses gene transcription.

The protein resides in the nucleus. Its subcellular location is the chromosome. Core component of nucleosome. Nucleosomes wrap and compact DNA into chromatin, limiting DNA accessibility to the cellular machineries which require DNA as a template. Histones thereby play a central role in transcription regulation, DNA repair, DNA replication and chromosomal stability. DNA accessibility is regulated via a complex set of post-translational modifications of histones, also called histone code, and nucleosome remodeling. The protein is Histone H2B.1 (HTB1) of Saccharomyces cerevisiae (strain ATCC 204508 / S288c) (Baker's yeast).